The following is a 189-amino-acid chain: Hypoxanthine/guanine phosphoribosyltransferase (189 aa).

This sequence belongs to the purine/pyrimidine phosphoribosyltransferase family. Archaeal HPRT subfamily. In terms of assembly, homodimer.

Its subcellular location is the cytoplasm. It catalyses the reaction IMP + diphosphate = hypoxanthine + 5-phospho-alpha-D-ribose 1-diphosphate. It carries out the reaction GMP + diphosphate = guanine + 5-phospho-alpha-D-ribose 1-diphosphate. The protein operates within purine metabolism; IMP biosynthesis via salvage pathway; IMP from hypoxanthine: step 1/1. In terms of biological role, catalyzes a salvage reaction resulting in the formation of IMP that is energically less costly than de novo synthesis. In Methanothrix soehngenii (strain ATCC 5969 / DSM 3671 / JCM 10134 / NBRC 103675 / OCM 69 / GP-6) (Methanosaeta concilii), this protein is Hypoxanthine/guanine phosphoribosyltransferase.